A 481-amino-acid chain; its full sequence is Probable Xaa-Pro aminopeptidase PEPP (481 aa).

Asp265, Asp276, Glu399, and Glu439 together coordinate Mn(2+).

The protein belongs to the peptidase M24B family. The cofactor is Mn(2+).

It carries out the reaction Release of any N-terminal amino acid, including proline, that is linked to proline, even from a dipeptide or tripeptide.. Its function is as follows. Catalyzes the removal of a penultimate prolyl residue from the N-termini of peptides. This is Probable Xaa-Pro aminopeptidase PEPP (PEPP) from Uncinocarpus reesii (strain UAMH 1704).